The primary structure comprises 253 residues: Demethylmenaquinone methyltransferase (253 aa).

S-adenosyl-L-methionine is bound by residues Thr-75, Asp-96, and 124–125 (DA).

This sequence belongs to the class I-like SAM-binding methyltransferase superfamily. MenG/UbiE family.

The catalysed reaction is a 2-demethylmenaquinol + S-adenosyl-L-methionine = a menaquinol + S-adenosyl-L-homocysteine + H(+). Its pathway is quinol/quinone metabolism; menaquinone biosynthesis; menaquinol from 1,4-dihydroxy-2-naphthoate: step 2/2. Functionally, methyltransferase required for the conversion of demethylmenaquinol (DMKH2) to menaquinol (MKH2). The protein is Demethylmenaquinone methyltransferase of Desulfitobacterium hafniense (strain Y51).